Consider the following 208-residue polypeptide: Small ribosomal subunit protein uS4 (208 aa).

An S4 RNA-binding domain is found at 98 to 161; that stretch reads RRLDNVIYRL…KESPRIKELL (64 aa).

Belongs to the universal ribosomal protein uS4 family. In terms of assembly, part of the 30S ribosomal subunit. Contacts protein S5. The interaction surface between S4 and S5 is involved in control of translational fidelity.

One of the primary rRNA binding proteins, it binds directly to 16S rRNA where it nucleates assembly of the body of the 30S subunit. Its function is as follows. With S5 and S12 plays an important role in translational accuracy. This is Small ribosomal subunit protein uS4 from Pelotomaculum thermopropionicum (strain DSM 13744 / JCM 10971 / SI).